The following is a 1574-amino-acid chain: Pentafunctional AROM polypeptide (1574 aa).

Residues 1–384 (MSCSNNTEPT…HEPRATTVED (384 aa)) form a 3-dehydroquinate synthase region. NAD(+)-binding positions include 49–51 (DTN), 85–88 (EISK), 116–118 (GGV), and D121. Residue R132 participates in 7-phospho-2-dehydro-3-deoxy-D-arabino-heptonate binding. 141–142 (TT) is a binding site for NAD(+). D148 and K154 together coordinate 7-phospho-2-dehydro-3-deoxy-D-arabino-heptonate. K163 is an NAD(+) binding site. N164 lines the 7-phospho-2-dehydro-3-deoxy-D-arabino-heptonate pocket. NAD(+) is bound by residues 181 to 184 (FLET) and N192. Position 196 (E196) interacts with Zn(2+). 7-phospho-2-dehydro-3-deoxy-D-arabino-heptonate contacts are provided by residues 196–199 (EVIK) and K250. E260 (proton acceptor; for 3-dehydroquinate synthase activity) is an active-site residue. 7-phospho-2-dehydro-3-deoxy-D-arabino-heptonate contacts are provided by residues 264–268 (RNLLN) and H271. H271 contacts Zn(2+). The Proton acceptor; for 3-dehydroquinate synthase activity role is filled by H275. 7-phospho-2-dehydro-3-deoxy-D-arabino-heptonate contacts are provided by H287 and K356. A Zn(2+)-binding site is contributed by H287. Positions 397-837 (ITPGVSTKLA…WDTLSQSFGL (441 aa)) are EPSP synthase. The For EPSP synthase activity role is filled by C819. The shikimate kinase stretch occupies residues 858 to 1052 (TRSVFIVGMR…TAKEQSFFVS (195 aa)). 865-872 (GMRGAGKT) provides a ligand contact to ATP. A 3-dehydroquinase region spans residues 1053–1266 (LTVPSVDSAV…AAPGQLSAAE (214 aa)). Residue H1169 is the Proton acceptor; for 3-dehydroquinate dehydratase activity of the active site. The active-site Schiff-base intermediate with substrate; for 3-dehydroquinate dehydratase activity is K1197. The shikimate dehydrogenase stretch occupies residues 1279–1574 (AQSFHLFGKP…NGDEIPTSTD (296 aa)).

This sequence in the N-terminal section; belongs to the sugar phosphate cyclases superfamily. Dehydroquinate synthase family. It in the 2nd section; belongs to the EPSP synthase family. The protein in the 3rd section; belongs to the shikimate kinase family. In the 4th section; belongs to the type-I 3-dehydroquinase family. This sequence in the C-terminal section; belongs to the shikimate dehydrogenase family. In terms of assembly, homodimer. It depends on Zn(2+) as a cofactor.

It localises to the cytoplasm. It catalyses the reaction 7-phospho-2-dehydro-3-deoxy-D-arabino-heptonate = 3-dehydroquinate + phosphate. The enzyme catalyses 3-dehydroquinate = 3-dehydroshikimate + H2O. It carries out the reaction shikimate + NADP(+) = 3-dehydroshikimate + NADPH + H(+). The catalysed reaction is shikimate + ATP = 3-phosphoshikimate + ADP + H(+). It catalyses the reaction 3-phosphoshikimate + phosphoenolpyruvate = 5-O-(1-carboxyvinyl)-3-phosphoshikimate + phosphate. It functions in the pathway metabolic intermediate biosynthesis; chorismate biosynthesis; chorismate from D-erythrose 4-phosphate and phosphoenolpyruvate: step 2/7. It participates in metabolic intermediate biosynthesis; chorismate biosynthesis; chorismate from D-erythrose 4-phosphate and phosphoenolpyruvate: step 3/7. The protein operates within metabolic intermediate biosynthesis; chorismate biosynthesis; chorismate from D-erythrose 4-phosphate and phosphoenolpyruvate: step 4/7. Its pathway is metabolic intermediate biosynthesis; chorismate biosynthesis; chorismate from D-erythrose 4-phosphate and phosphoenolpyruvate: step 5/7. It functions in the pathway metabolic intermediate biosynthesis; chorismate biosynthesis; chorismate from D-erythrose 4-phosphate and phosphoenolpyruvate: step 6/7. The AROM polypeptide catalyzes 5 consecutive enzymatic reactions in prechorismate polyaromatic amino acid biosynthesis. The chain is Pentafunctional AROM polypeptide from Verticillium alfalfae (strain VaMs.102 / ATCC MYA-4576 / FGSC 10136) (Verticillium wilt of alfalfa).